We begin with the raw amino-acid sequence, 399 residues long: Acetate kinase (399 aa).

Asn-7 lines the Mg(2+) pocket. Lys-14 is an ATP binding site. Arg-91 contributes to the substrate binding site. The active-site Proton donor/acceptor is the Asp-148. ATP contacts are provided by residues 208–212 (HLGNG), 283–285 (DFR), and 331–335 (GLGEN). Glu-384 contributes to the Mg(2+) binding site.

The protein belongs to the acetokinase family. Homodimer. The cofactor is Mg(2+). Mn(2+) serves as cofactor.

The protein localises to the cytoplasm. The catalysed reaction is acetate + ATP = acetyl phosphate + ADP. The protein operates within metabolic intermediate biosynthesis; acetyl-CoA biosynthesis; acetyl-CoA from acetate: step 1/2. In terms of biological role, catalyzes the formation of acetyl phosphate from acetate and ATP. Can also catalyze the reverse reaction. The sequence is that of Acetate kinase from Desulfitobacterium hafniense (strain Y51).